The sequence spans 434 residues: Protein maelstrom homolog (434 aa).

A DNA-binding region (HMG box) is located at residues 4-73; the sequence is RRASRNAYYF…AQGKDSGPSE (70 aa).

It belongs to the maelstrom family. As to quaternary structure, interacts with SMARCB1, SIN3B and DDX4. Interacts with piRNA-associated proteins TDRD1, PIWIL1 and PIWIL2. Interacts with Tex19.1 and, probably, Tex19.2. As to expression, testis-specific. Present in spermatocytes and round and early elongating spermatids.

Its subcellular location is the cytoplasm. The protein localises to the nucleus. Functionally, plays a central role during spermatogenesis by repressing transposable elements and preventing their mobilization, which is essential for the germline integrity. Acts via the piRNA metabolic process, which mediates the repression of transposable elements during meiosis by forming complexes composed of piRNAs and Piwi proteins and governs the methylation and subsequent repression of transposons. Its association with piP-bodies suggests a participation in the secondary piRNAs metabolic process. Required for the localization of germ-cell factors to the meiotic nuage. This Mus musculus (Mouse) protein is Protein maelstrom homolog.